We begin with the raw amino-acid sequence, 651 residues long: Methionine--tRNA ligase (651 aa).

Residues 10 to 20 (AYTNGPLHLGH) carry the 'HIGH' region motif. Cys-142, Cys-145, Cys-154, and Cys-157 together coordinate Zn(2+). The short motif at 320-324 (KMSTS) is the 'KMSKS' region element. An ATP-binding site is contributed by Thr-323. A tRNA-binding domain is found at 550-651 (YLEKIDLRVG…KDIKAGSKVR (102 aa)).

This sequence belongs to the class-I aminoacyl-tRNA synthetase family. MetG type 1 subfamily. In terms of assembly, homodimer. Zn(2+) is required as a cofactor.

Its subcellular location is the cytoplasm. The catalysed reaction is tRNA(Met) + L-methionine + ATP = L-methionyl-tRNA(Met) + AMP + diphosphate. Functionally, is required not only for elongation of protein synthesis but also for the initiation of all mRNA translation through initiator tRNA(fMet) aminoacylation. The sequence is that of Methionine--tRNA ligase from Methanocaldococcus jannaschii (strain ATCC 43067 / DSM 2661 / JAL-1 / JCM 10045 / NBRC 100440) (Methanococcus jannaschii).